Here is a 230-residue protein sequence, read N- to C-terminus: Flagellar L-ring protein (230 aa).

The first 21 residues, 1–21 (MMLKTVLRLPVCAALLALAAG), serve as a signal peptide directing secretion. Cysteine 22 carries the N-palmitoyl cysteine lipid modification. Cysteine 22 carries the S-diacylglycerol cysteine lipid modification. The interval 34–53 (PLTAPPPPPPQPSARPNGSI) is disordered. Positions 36-46 (TAPPPPPPQPS) are enriched in pro residues.

The protein belongs to the FlgH family. As to quaternary structure, the basal body constitutes a major portion of the flagellar organelle and consists of four rings (L,P,S, and M) mounted on a central rod.

The protein localises to the cell outer membrane. It localises to the bacterial flagellum basal body. Assembles around the rod to form the L-ring and probably protects the motor/basal body from shearing forces during rotation. This chain is Flagellar L-ring protein, found in Bordetella parapertussis (strain 12822 / ATCC BAA-587 / NCTC 13253).